The chain runs to 263 residues: Troponin T, fast skeletal muscle isoforms (263 aa).

The segment covering 1 to 26 (MSDTEEVEHGEEEYEEEAHEAEEVHE) has biased composition (acidic residues). 3 disordered regions span residues 1-66 (MSDT…FDDI), 107-188 (RAER…VLAE), and 243-263 (DQAQKHSKKAGAKGKVGGRWK). Residue Ser-2 is modified to N-acetylserine. 3 stretches are compositionally biased toward basic and acidic residues: residues 56-66 (PEGEKVDFDDI), 107-149 (RAER…DDLK), and 177-188 (TARETKKKVLAE). Positions 247 to 263 (KHSKKAGAKGKVGGRWK) are enriched in basic residues.

It belongs to the troponin T family.

Troponin T is the tropomyosin-binding subunit of troponin, the thin filament regulatory complex which confers calcium-sensitivity to striated muscle actomyosin ATPase activity. The protein is Troponin T, fast skeletal muscle isoforms (TNNT3) of Gallus gallus (Chicken).